We begin with the raw amino-acid sequence, 82 residues long: Small ribosomal subunit protein bS16 (82 aa).

Belongs to the bacterial ribosomal protein bS16 family.

In Methylobacillus flagellatus (strain ATCC 51484 / DSM 6875 / VKM B-1610 / KT), this protein is Small ribosomal subunit protein bS16.